The primary structure comprises 510 residues: Calmodulin-binding receptor-like cytoplasmic kinase 3 (510 aa).

The signal sequence occupies residues 1–30; it reads MGGDDLSFTRLVITALFGLLMLLQIKETSA. A compositionally biased stretch (polar residues) spans 166 to 178; it reads VSSFEMSPSSEKI. The segment at 166–209 is disordered; the sequence is VSSFEMSPSSEKIPQSPFRAPPSPSRVPQSPSRYAMSPRPSRLG. Phosphothreonine is present on Thr-214. A Protein kinase domain is found at 225–499; sequence FADSHQIGEG…MEAVGKQLWA (275 aa). Residues 231–239 and Lys-253 contribute to the ATP site; that span reads IGEGGFGVV. The segment at 240 to 265 is caM-binding; sequence FKGVLDDGQVVAIKRAKKEHFENLRT. Asp-350 functions as the Proton acceptor in the catalytic mechanism. Phosphoserine is present on Ser-354. A phosphothreonine mark is found at Thr-386 and Thr-391. Residue Tyr-399 is modified to Phosphotyrosine.

It belongs to the protein kinase superfamily. Ser/Thr protein kinase family. As to quaternary structure, interacts with calmodulin (CaM) in a Ca(2+)-dependent manner.

The protein localises to the cytoplasm. The enzyme catalyses L-seryl-[protein] + ATP = O-phospho-L-seryl-[protein] + ADP + H(+). It catalyses the reaction L-threonyl-[protein] + ATP = O-phospho-L-threonyl-[protein] + ADP + H(+). In Arabidopsis thaliana (Mouse-ear cress), this protein is Calmodulin-binding receptor-like cytoplasmic kinase 3 (CRCK3).